Here is a 372-residue protein sequence, read N- to C-terminus: Putative glutamate--cysteine ligase 2 (372 aa).

The protein belongs to the glutamate--cysteine ligase type 2 family. YbdK subfamily. In terms of assembly, homodimer.

The enzyme catalyses L-cysteine + L-glutamate + ATP = gamma-L-glutamyl-L-cysteine + ADP + phosphate + H(+). In terms of biological role, ATP-dependent carboxylate-amine ligase which exhibits weak glutamate--cysteine ligase activity. This is Putative glutamate--cysteine ligase 2 (ybdK) from Escherichia coli O8 (strain IAI1).